The sequence spans 156 residues: ATP synthase subunit b (156 aa).

Residues 12 to 32 traverse the membrane as a helical segment; the sequence is IAFAIFVWFCVKYVWPPITAA.

The protein belongs to the ATPase B chain family. F-type ATPases have 2 components, F(1) - the catalytic core - and F(0) - the membrane proton channel. F(1) has five subunits: alpha(3), beta(3), gamma(1), delta(1), epsilon(1). F(0) has three main subunits: a(1), b(2) and c(10-14). The alpha and beta chains form an alternating ring which encloses part of the gamma chain. F(1) is attached to F(0) by a central stalk formed by the gamma and epsilon chains, while a peripheral stalk is formed by the delta and b chains.

Its subcellular location is the cell inner membrane. In terms of biological role, f(1)F(0) ATP synthase produces ATP from ADP in the presence of a proton or sodium gradient. F-type ATPases consist of two structural domains, F(1) containing the extramembraneous catalytic core and F(0) containing the membrane proton channel, linked together by a central stalk and a peripheral stalk. During catalysis, ATP synthesis in the catalytic domain of F(1) is coupled via a rotary mechanism of the central stalk subunits to proton translocation. Functionally, component of the F(0) channel, it forms part of the peripheral stalk, linking F(1) to F(0). This is ATP synthase subunit b from Marinobacter nauticus (strain ATCC 700491 / DSM 11845 / VT8) (Marinobacter aquaeolei).